A 274-amino-acid chain; its full sequence is Rhamnulose-1-phosphate aldolase (274 aa).

Residue Glu117 is part of the active site. Zn(2+) is bound by residues His141, His143, and His212.

Belongs to the aldolase class II family. RhaD subfamily. In terms of assembly, homotetramer. Zn(2+) serves as cofactor.

The protein localises to the cytoplasm. It catalyses the reaction L-rhamnulose 1-phosphate = (S)-lactaldehyde + dihydroxyacetone phosphate. Its pathway is carbohydrate degradation; L-rhamnose degradation; glycerone phosphate from L-rhamnose: step 3/3. Catalyzes the reversible cleavage of L-rhamnulose-1-phosphate to dihydroxyacetone phosphate (DHAP) and L-lactaldehyde. The polypeptide is Rhamnulose-1-phosphate aldolase (Yersinia pseudotuberculosis serotype I (strain IP32953)).